A 413-amino-acid polypeptide reads, in one-letter code: Arginine biosynthesis bifunctional protein ArgJ (413 aa).

Substrate contacts are provided by Thr-158, Lys-184, Thr-195, Glu-285, Asn-408, and Ser-413. Residue Thr-195 is the Nucleophile of the active site.

It belongs to the ArgJ family. Heterotetramer of two alpha and two beta chains.

The protein resides in the cytoplasm. It carries out the reaction N(2)-acetyl-L-ornithine + L-glutamate = N-acetyl-L-glutamate + L-ornithine. The enzyme catalyses L-glutamate + acetyl-CoA = N-acetyl-L-glutamate + CoA + H(+). It functions in the pathway amino-acid biosynthesis; L-arginine biosynthesis; L-ornithine and N-acetyl-L-glutamate from L-glutamate and N(2)-acetyl-L-ornithine (cyclic): step 1/1. Its pathway is amino-acid biosynthesis; L-arginine biosynthesis; N(2)-acetyl-L-ornithine from L-glutamate: step 1/4. In terms of biological role, catalyzes two activities which are involved in the cyclic version of arginine biosynthesis: the synthesis of N-acetylglutamate from glutamate and acetyl-CoA as the acetyl donor, and of ornithine by transacetylation between N(2)-acetylornithine and glutamate. This chain is Arginine biosynthesis bifunctional protein ArgJ, found in Bradyrhizobium diazoefficiens (strain JCM 10833 / BCRC 13528 / IAM 13628 / NBRC 14792 / USDA 110).